A 497-amino-acid chain; its full sequence is Aspartyl/glutamyl-tRNA(Asn/Gln) amidotransferase subunit B (497 aa).

Belongs to the GatB/GatE family. GatB subfamily. In terms of assembly, heterotrimer of A, B and C subunits.

The catalysed reaction is L-glutamyl-tRNA(Gln) + L-glutamine + ATP + H2O = L-glutaminyl-tRNA(Gln) + L-glutamate + ADP + phosphate + H(+). It carries out the reaction L-aspartyl-tRNA(Asn) + L-glutamine + ATP + H2O = L-asparaginyl-tRNA(Asn) + L-glutamate + ADP + phosphate + 2 H(+). Its function is as follows. Allows the formation of correctly charged Asn-tRNA(Asn) or Gln-tRNA(Gln) through the transamidation of misacylated Asp-tRNA(Asn) or Glu-tRNA(Gln) in organisms which lack either or both of asparaginyl-tRNA or glutaminyl-tRNA synthetases. The reaction takes place in the presence of glutamine and ATP through an activated phospho-Asp-tRNA(Asn) or phospho-Glu-tRNA(Gln). The polypeptide is Aspartyl/glutamyl-tRNA(Asn/Gln) amidotransferase subunit B (Rhodopirellula baltica (strain DSM 10527 / NCIMB 13988 / SH1)).